The chain runs to 472 residues: Argininosuccinate lyase (472 aa).

It belongs to the lyase 1 family. Argininosuccinate lyase subfamily.

Its subcellular location is the cytoplasm. It carries out the reaction 2-(N(omega)-L-arginino)succinate = fumarate + L-arginine. It functions in the pathway amino-acid biosynthesis; L-arginine biosynthesis; L-arginine from L-ornithine and carbamoyl phosphate: step 3/3. This chain is Argininosuccinate lyase, found in Rhodococcus opacus (strain B4).